The sequence spans 694 residues: Elongation factor G (694 aa).

The region spanning 8 to 287 (EDYRNFGIMA…AVVEFLPAPT (280 aa)) is the tr-type G domain. GTP is bound by residues 17-24 (AHIDAGKT), 86-90 (DTPGH), and 140-143 (NKMD).

The protein belongs to the TRAFAC class translation factor GTPase superfamily. Classic translation factor GTPase family. EF-G/EF-2 subfamily.

The protein resides in the cytoplasm. Catalyzes the GTP-dependent ribosomal translocation step during translation elongation. During this step, the ribosome changes from the pre-translocational (PRE) to the post-translocational (POST) state as the newly formed A-site-bound peptidyl-tRNA and P-site-bound deacylated tRNA move to the P and E sites, respectively. Catalyzes the coordinated movement of the two tRNA molecules, the mRNA and conformational changes in the ribosome. This chain is Elongation factor G, found in Brucella melitensis biotype 2 (strain ATCC 23457).